Reading from the N-terminus, the 267-residue chain is Acetylglutamate kinase (267 aa).

Substrate is bound by residues 53 to 54, arginine 75, and asparagine 167; that span reads GG.

The protein belongs to the acetylglutamate kinase family. ArgB subfamily.

It localises to the cytoplasm. It carries out the reaction N-acetyl-L-glutamate + ATP = N-acetyl-L-glutamyl 5-phosphate + ADP. It functions in the pathway amino-acid biosynthesis; L-arginine biosynthesis; N(2)-acetyl-L-ornithine from L-glutamate: step 2/4. Its function is as follows. Catalyzes the ATP-dependent phosphorylation of N-acetyl-L-glutamate. This Shewanella pealeana (strain ATCC 700345 / ANG-SQ1) protein is Acetylglutamate kinase.